The following is a 278-amino-acid chain: Neuronal membrane glycoprotein M6-a (278 aa).

M1 is modified (N-acetylmethionine). Residues 1–22 (MEENMEEGQTQKGCFECCIKCL) are Cytoplasmic-facing. The helical transmembrane segment at 23-43 (GGIPYASLIATILLYAGVALF) threads the bilayer. The Extracellular portion of the chain corresponds to 44 to 84 (CGCGHEALSGTVNILQTYFEMARTAGDTLDVFTMIDIFKYV). The helical transmembrane segment at 85–105 (IYGIAAAFFVYGILLMVEGFF) threads the bilayer. Residues 106–127 (TTGAIKDLYGDFKITTCGRCVS) are Cytoplasmic-facing. Residues 128-148 (AWFIMLTYLFMLAWLGVTAFT) traverse the membrane as a helical segment. At 149 to 213 (SLPVYMYFNL…STELNMTFHL (65 aa)) the chain is on the extracellular side. N164 carries N-linked (GlcNAc...) asparagine glycosylation. A disulfide bridge links C174 with C192. An N-linked (GlcNAc...) asparagine glycan is attached at N208. A helical transmembrane segment spans residues 214 to 234 (FIVALAGAGAAVIAMVHYLMV). Over 235–278 (LSANWAYVKDACRMQKYEDIKSKEEQELHDIHSTRSKERLNAYT) the chain is Cytoplasmic. S256 is subject to Phosphoserine. T278 is subject to Phosphothreonine.

It belongs to the myelin proteolipid protein family. As to quaternary structure, interacts with OPRM1. Interacts with palmitoyltransferase ZDHHC17/HIP14; the interaction leads to palmitoylation of GPM6A. In terms of processing, N-glycosylated. Post-translationally, palmitoylated by ZDHHC17/HIP14.

It localises to the cell membrane. The protein resides in the cell projection. Its subcellular location is the axon. It is found in the growth cone. The protein localises to the dendritic spine. It localises to the filopodium. The protein resides in the neuron projection. Its function is as follows. Involved in neuronal differentiation, including differentiation and migration of neuronal stem cells. Plays a role in neuronal plasticity and is involved in neurite and filopodia outgrowth, filopodia motility and probably synapse formation. GPM6A-induced filopodia formation involves mitogen-activated protein kinase (MAPK) and Src signaling pathways. May be involved in neuronal NGF-dependent Ca(2+) influx. May be involved in regulation of endocytosis and intracellular trafficking of G-protein-coupled receptors (GPCRs); may enhance internalization and recycling of mu-type opioid receptor. This is Neuronal membrane glycoprotein M6-a (GPM6A) from Bos taurus (Bovine).